The sequence spans 888 residues: Lon protease homolog 2, peroxisomal (888 aa).

A Lon N-terminal domain is found at 11–255 (LAILPFRNKV…KATELVDRHL (245 aa)). Residue 408 to 415 (GPPGVGKT) participates in ATP binding. One can recognise a Lon proteolytic domain in the interval 692–877 (VASAGVSVGL…EDVLENAFEG (186 aa)). Active-site residues include serine 783 and lysine 826. Residues 886 to 888 (SKL) carry the Microbody targeting signal motif.

Belongs to the peptidase S16 family.

It is found in the peroxisome matrix. The enzyme catalyses Hydrolysis of proteins in presence of ATP.. Functionally, ATP-dependent serine protease that mediates the selective degradation of misfolded and unassembled polypeptides in the peroxisomal matrix. Necessary for type 2 peroxisome targeting signal (PTS2)-containing protein processing and facilitates peroxisome matrix protein import. The polypeptide is Lon protease homolog 2, peroxisomal (LON2) (Arabidopsis thaliana (Mouse-ear cress)).